The chain runs to 218 residues: Putative pre-16S rRNA nuclease (218 aa).

It belongs to the YqgF nuclease family.

It is found in the cytoplasm. Its function is as follows. Could be a nuclease involved in processing of the 5'-end of pre-16S rRNA. This Thermotoga maritima (strain ATCC 43589 / DSM 3109 / JCM 10099 / NBRC 100826 / MSB8) protein is Putative pre-16S rRNA nuclease.